The primary structure comprises 309 residues: Taste receptor type 2 member 113 (309 aa).

The Extracellular portion of the chain corresponds to 1 to 8 (MVAVLQST). Residues 9–29 (FAIIFSMEFIVGTLGNGFIIL) form a helical membrane-spanning segment. The Cytoplasmic segment spans residues 30-55 (MTCIDWVRRRKISLVDQILTALAITR). A helical transmembrane segment spans residues 56–76 (ITLILLVFIDWWVSVLFPALH). Topologically, residues 77 to 101 (ETGKILRMYFISWTVINHCNLWLTA) are extracellular. Residues 102–122 (SLSIIYFLKIASFSSIIFLYL) traverse the membrane as a helical segment. The Cytoplasmic portion of the chain corresponds to 123–127 (KFRVK). The helical transmembrane segment at 128–148 (NVVFVTLLVSLFFLFINTAIV) threads the bilayer. Topologically, residues 149-185 (NVYFDVCFDGVQRNVSQVSRLYNHEQICKFLSFTNPM) are extracellular. N-linked (GlcNAc...) asparagine glycosylation occurs at Asn-162. The helical transmembrane segment at 186-206 (FAFIPFVTSMATFFLLIFSLW) threads the bilayer. Residues 207 to 229 (RHLKNMKHNAEGCRDVSTIVHIR) lie on the Cytoplasmic side of the membrane. Residues 230 to 250 (ALQTIIVSVVLYSTFFLSFFV) traverse the membrane as a helical segment. At 251-262 (KVWSSGSPERYL) the chain is on the extracellular side. Residues 263–283 (IFLFVWALGNAVLPAHTFVLI) traverse the membrane as a helical segment. Residues 284 to 309 (WGNCRLRWASLSLMLWLRYRFKNIDV) are Cytoplasmic-facing.

It belongs to the G-protein coupled receptor T2R family.

Its subcellular location is the membrane. Its function is as follows. Putative taste receptor which may play a role in the perception of bitterness. This is Taste receptor type 2 member 113 from Rattus norvegicus (Rat).